Consider the following 251-residue polypeptide: Octanoyltransferase (251 aa).

A BPL/LPL catalytic domain is found at 49-230 (DEIADQILVL…DLDDAFAGRL (182 aa)). Substrate is bound by residues 87–94 (RGGRITWH), 160–162 (ALG), and 173–175 (GLA). Residue C191 is the Acyl-thioester intermediate of the active site.

The protein belongs to the LipB family.

It is found in the cytoplasm. The catalysed reaction is octanoyl-[ACP] + L-lysyl-[protein] = N(6)-octanoyl-L-lysyl-[protein] + holo-[ACP] + H(+). It functions in the pathway protein modification; protein lipoylation via endogenous pathway; protein N(6)-(lipoyl)lysine from octanoyl-[acyl-carrier-protein]: step 1/2. Catalyzes the transfer of endogenously produced octanoic acid from octanoyl-acyl-carrier-protein onto the lipoyl domains of lipoate-dependent enzymes. Lipoyl-ACP can also act as a substrate although octanoyl-ACP is likely to be the physiological substrate. The sequence is that of Octanoyltransferase from Corynebacterium efficiens (strain DSM 44549 / YS-314 / AJ 12310 / JCM 11189 / NBRC 100395).